Consider the following 464-residue polypeptide: 17,18-epoxy-17-hydroxycur-19-ene N-malonyltransferase (464 aa).

Residues His-191 and Asp-403 each act as proton acceptor in the active site.

The protein belongs to the plant acyltransferase family. In terms of assembly, monomer. Mainly expressed in roots.

Its subcellular location is the cytoplasm. It catalyses the reaction 17,18-epoxy-17-hydroxycur-19-ene + malonyl-CoA = prestrychnine + CoA. It participates in alkaloid biosynthesis. Its function is as follows. Malonylransferase involved in the biosynthesis of curare monoterpene indole alkaloids (MIAs), natural products such as strychnine, a neurotoxic compound used as a pesticide to control rodents, and its pharmacologically active derivatives, including brucine, used to regulate blood pressure. Curare alkaloids act as animal glycine receptor antagonists. Catalyzes the conversion of 17,18-epoxy-17-hydroxycur-19-ene (Wieland-Gumlich aldehyde) to prestrychnine, which is spontaneously converted into strychnine and isostrychnine. This Strychnos nux-vomica (Poison nut) protein is 17,18-epoxy-17-hydroxycur-19-ene N-malonyltransferase.